The primary structure comprises 253 residues: Triosephosphate isomerase (253 aa).

9–11 (NWK) is a substrate binding site. The active-site Electrophile is the histidine 97. Glutamate 169 acts as the Proton acceptor in catalysis. Substrate contacts are provided by residues glycine 175, serine 215, and 236 to 237 (GG).

The protein belongs to the triosephosphate isomerase family. As to quaternary structure, homodimer.

It is found in the cytoplasm. The enzyme catalyses D-glyceraldehyde 3-phosphate = dihydroxyacetone phosphate. The protein operates within carbohydrate biosynthesis; gluconeogenesis. It participates in carbohydrate degradation; glycolysis; D-glyceraldehyde 3-phosphate from glycerone phosphate: step 1/1. Functionally, involved in the gluconeogenesis. Catalyzes stereospecifically the conversion of dihydroxyacetone phosphate (DHAP) to D-glyceraldehyde-3-phosphate (G3P). The chain is Triosephosphate isomerase from Staphylococcus epidermidis (strain ATCC 35984 / DSM 28319 / BCRC 17069 / CCUG 31568 / BM 3577 / RP62A).